We begin with the raw amino-acid sequence, 298 residues long: Mitochondrial 2-oxodicarboxylate carrier (298 aa).

3 Solcar repeats span residues 10-99, 106-195, and 204-293; these read HETS…YKKF, SPGL…VKNI, and LEFL…TYAW. The next 6 membrane-spanning stretches (helical) occupy residues 16–36, 69–88, 112–132, 166–186, 204–224, and 276–296; these read VAAGGSAGLVEICLMHPLDVV, FGFYKGIIPPILAETPKRAV, LIAGLGSGLTEAVVVNPFEVV, GLNKGLTATLGRHGIFNMVYF, LEFLRKFGIGFVSGTMGSVFN, and LGPGGGVMLLVYEYTYAWLQE.

Belongs to the mitochondrial carrier (TC 2.A.29) family.

It is found in the mitochondrion inner membrane. The catalysed reaction is 2-oxoadipate(in) + 2-oxoglutarate(out) = 2-oxoadipate(out) + 2-oxoglutarate(in). It catalyses the reaction hexanedioate(in) + 2-oxoglutarate(out) = hexanedioate(out) + 2-oxoglutarate(in). The enzyme catalyses L-2-aminoadipate(in) + 2-oxoglutarate(out) = L-2-aminoadipate(out) + 2-oxoglutarate(in). It carries out the reaction glutarate(in) + 2-oxoglutarate(out) = glutarate(out) + 2-oxoglutarate(in). The catalysed reaction is 2-oxoheptanedioate(in) + 2-oxoglutarate(out) = 2-oxoheptanedioate(out) + 2-oxoglutarate(in). It catalyses the reaction heptanedioate(in) + 2-oxoglutarate(out) = heptanedioate(out) + 2-oxoglutarate(in). The enzyme catalyses citrate(in) + 2-oxoglutarate(out) = citrate(out) + 2-oxoglutarate(in). In terms of biological role, transports dicarboxylates across the inner membranes of mitochondria by a counter-exchange mechanism. Can transport 2-oxoadipate (2-oxohexanedioate), 2-oxoglutarate, adipate (hexanedioate), glutarate, and to a lesser extent, pimelate (heptanedioate), 2-oxopimelate (2-oxoheptanedioate), 2-aminoadipate (2-aminohexanedioate), oxaloacetate, and citrate. Plays a central role in catabolism of lysine, hydroxylysine, and tryptophan, by transporting common metabolite intermediates (such as 2-oxoadipate) into the mitochondria, where it is converted into acetyl-CoA and can enter the citric acid (TCA) cycle. The chain is Mitochondrial 2-oxodicarboxylate carrier (Slc25a21) from Mus musculus (Mouse).